The primary structure comprises 404 residues: Acetylornithine aminotransferase (404 aa).

Residues 113–114 (GT) and Phe-139 contribute to the pyridoxal 5'-phosphate site. Arg-142 provides a ligand contact to N(2)-acetyl-L-ornithine. Residue 224-227 (DEVQ) participates in pyridoxal 5'-phosphate binding. Lys-253 carries the N6-(pyridoxal phosphate)lysine modification. Ser-281 is a binding site for N(2)-acetyl-L-ornithine. Residue Thr-282 coordinates pyridoxal 5'-phosphate.

Belongs to the class-III pyridoxal-phosphate-dependent aminotransferase family. ArgD subfamily. Homodimer. The cofactor is pyridoxal 5'-phosphate.

It localises to the cytoplasm. The catalysed reaction is N(2)-acetyl-L-ornithine + 2-oxoglutarate = N-acetyl-L-glutamate 5-semialdehyde + L-glutamate. Its pathway is amino-acid biosynthesis; L-arginine biosynthesis; N(2)-acetyl-L-ornithine from L-glutamate: step 4/4. The sequence is that of Acetylornithine aminotransferase from Mycobacterium leprae (strain TN).